The following is a 764-amino-acid chain: 5-methyltetrahydropteroyltriglutamate--homocysteine methyltransferase (764 aa).

5-methyltetrahydropteroyltri-L-glutamate-binding positions include Arg-16 to Lys-19 and Lys-121. L-homocysteine-binding positions include Ile-440 to Ser-442 and Glu-493. L-methionine is bound by residues Ile-440 to Ser-442 and Glu-493. 5-methyltetrahydropteroyltri-L-glutamate contacts are provided by residues Arg-524 to Cys-525 and Trp-570. L-homocysteine is bound at residue Asp-608. Asp-608 contacts L-methionine. Residue Glu-614 participates in 5-methyltetrahydropteroyltri-L-glutamate binding. 3 residues coordinate Zn(2+): His-650, Cys-652, and Glu-674. His-703 (proton donor) is an active-site residue. Cys-735 is a Zn(2+) binding site.

It belongs to the vitamin-B12 independent methionine synthase family. Zn(2+) serves as cofactor.

It carries out the reaction 5-methyltetrahydropteroyltri-L-glutamate + L-homocysteine = tetrahydropteroyltri-L-glutamate + L-methionine. Its pathway is amino-acid biosynthesis; L-methionine biosynthesis via de novo pathway; L-methionine from L-homocysteine (MetE route): step 1/1. Functionally, catalyzes the transfer of a methyl group from 5-methyltetrahydrofolate to homocysteine resulting in methionine formation. This is 5-methyltetrahydropteroyltriglutamate--homocysteine methyltransferase from Burkholderia cenocepacia (strain ATCC BAA-245 / DSM 16553 / LMG 16656 / NCTC 13227 / J2315 / CF5610) (Burkholderia cepacia (strain J2315)).